A 54-amino-acid chain; its full sequence is Large ribosomal subunit protein bL32c (54 aa).

This sequence belongs to the bacterial ribosomal protein bL32 family.

It localises to the plastid. The protein localises to the chloroplast. The protein is Large ribosomal subunit protein bL32c of Piper cenocladum (Ant piper).